The sequence spans 179 residues: Transcription factor 21 (179 aa).

Positions 20–86 are disordered; it reads CDGIKLDPNK…KQVQRNAANA (67 aa). Residues 34-46 are compositionally biased toward polar residues; sequence SNDSNEESSTCDN. Positions 50-64 are enriched in basic residues; the sequence is KKGRGTSGKRRKASS. Polar residues predominate over residues 70–80; it reads GTINQEGKQVQ. In terms of domain architecture, bHLH spans 79–131; the sequence is VQRNAANARERARMRVLSKAFSRLKTTLPWVPPDTKLSKLDTLRLASSYIAHL.

As to quaternary structure, efficient DNA binding requires dimerization with another bHLH protein. At the start of neurulation (stage 13), expressed in the pronephros. At tailbud stage (stage 25-28), expression is high in the anterior-most branchial arch and pronephric glomus. At stage 40, staining persists in the glomus and in the epicardium region of the heart, and at stage 42, expression is higher in the glomus than in the kidney tubule or duct. In adults, expression is highest in the rectum and the spleen, with significant expression in the duodenum, heart, kidney, lungs, pancreas, skin, liver and muscle.

Its subcellular location is the nucleus. Functionally, involved in epithelial-mesenchymal interactions in kidney and lung morphogenesis that include epithelial differentiation and branching morphogenesis. This is Transcription factor 21 (tcf21) from Xenopus laevis (African clawed frog).